The sequence spans 185 residues: Protein GrpE (185 aa).

This sequence belongs to the GrpE family. In terms of assembly, homodimer.

The protein localises to the cytoplasm. Participates actively in the response to hyperosmotic and heat shock by preventing the aggregation of stress-denatured proteins, in association with DnaK and GrpE. It is the nucleotide exchange factor for DnaK and may function as a thermosensor. Unfolded proteins bind initially to DnaJ; upon interaction with the DnaJ-bound protein, DnaK hydrolyzes its bound ATP, resulting in the formation of a stable complex. GrpE releases ADP from DnaK; ATP binding to DnaK triggers the release of the substrate protein, thus completing the reaction cycle. Several rounds of ATP-dependent interactions between DnaJ, DnaK and GrpE are required for fully efficient folding. The sequence is that of Protein GrpE from Methanobrevibacter smithii (strain ATCC 35061 / DSM 861 / OCM 144 / PS).